Here is a 502-residue protein sequence, read N- to C-terminus: Glycerol kinase (502 aa).

Thr-14 is an ADP binding site. ATP-binding residues include Thr-14, Thr-15, and Ser-16. Residue Thr-14 coordinates sn-glycerol 3-phosphate. Arg-18 provides a ligand contact to ADP. 4 residues coordinate sn-glycerol 3-phosphate: Arg-84, Glu-85, Tyr-136, and Asp-246. Glycerol contacts are provided by Arg-84, Glu-85, Tyr-136, Asp-246, and Gln-247. Residues Thr-268 and Gly-311 each contribute to the ADP site. Residues Thr-268, Gly-311, Gln-315, and Gly-412 each coordinate ATP. ADP contacts are provided by Gly-412 and Asn-416.

Belongs to the FGGY kinase family. In terms of assembly, homotetramer and homodimer (in equilibrium). Heterodimer with EIIA-Glc. Binds 1 zinc ion per glycerol kinase EIIA-Glc dimer. The zinc ion is important for dimerization.

The enzyme catalyses glycerol + ATP = sn-glycerol 3-phosphate + ADP + H(+). The protein operates within polyol metabolism; glycerol degradation via glycerol kinase pathway; sn-glycerol 3-phosphate from glycerol: step 1/1. With respect to regulation, activity of this regulatory enzyme is affected by several metabolites. Allosterically and non-competitively inhibited by fructose 1,6-bisphosphate (FBP) and unphosphorylated phosphocarrier protein EIIA-Glc (III-Glc), an integral component of the bacterial phosphotransferase (PTS) system. In terms of biological role, key enzyme in the regulation of glycerol uptake and metabolism. Catalyzes the phosphorylation of glycerol to yield sn-glycerol 3-phosphate. The chain is Glycerol kinase from Salmonella agona (strain SL483).